Here is a 428-residue protein sequence, read N- to C-terminus: 3-phosphoshikimate 1-carboxyvinyltransferase (428 aa).

K21, S22, and R26 together coordinate 3-phosphoshikimate. Residue K21 participates in phosphoenolpyruvate binding. Phosphoenolpyruvate is bound by residues G91 and R119. 4 residues coordinate 3-phosphoshikimate: S164, Q166, D311, and K338. Residue Q166 coordinates phosphoenolpyruvate. D311 functions as the Proton acceptor in the catalytic mechanism. Residues R342 and R383 each contribute to the phosphoenolpyruvate site.

Belongs to the EPSP synthase family. Monomer.

Its subcellular location is the cytoplasm. The catalysed reaction is 3-phosphoshikimate + phosphoenolpyruvate = 5-O-(1-carboxyvinyl)-3-phosphoshikimate + phosphate. Its pathway is metabolic intermediate biosynthesis; chorismate biosynthesis; chorismate from D-erythrose 4-phosphate and phosphoenolpyruvate: step 6/7. In terms of biological role, catalyzes the transfer of the enolpyruvyl moiety of phosphoenolpyruvate (PEP) to the 5-hydroxyl of shikimate-3-phosphate (S3P) to produce enolpyruvyl shikimate-3-phosphate and inorganic phosphate. This Campylobacter concisus (strain 13826) protein is 3-phosphoshikimate 1-carboxyvinyltransferase.